Reading from the N-terminus, the 382-residue chain is Histidinol-phosphate aminotransferase (382 aa).

At Lys-215 the chain carries N6-(pyridoxal phosphate)lysine. Residues 363-382 are disordered; it reads NIDNQNKTYSQTSSIRKGTI.

It belongs to the class-II pyridoxal-phosphate-dependent aminotransferase family. Histidinol-phosphate aminotransferase subfamily. In terms of assembly, homodimer. It depends on pyridoxal 5'-phosphate as a cofactor.

The enzyme catalyses L-histidinol phosphate + 2-oxoglutarate = 3-(imidazol-4-yl)-2-oxopropyl phosphate + L-glutamate. It participates in amino-acid biosynthesis; L-histidine biosynthesis; L-histidine from 5-phospho-alpha-D-ribose 1-diphosphate: step 7/9. This is Histidinol-phosphate aminotransferase from Yersinia pestis bv. Antiqua (strain Antiqua).